Reading from the N-terminus, the 374-residue chain is Dual-specificity RNA methyltransferase RlmN (374 aa).

The Proton acceptor role is filled by Glu-91. One can recognise a Radical SAM core domain in the interval Glu-97–Asp-340. A disulfide bridge connects residues Cys-104 and Cys-345. Positions 111, 115, and 118 each coordinate [4Fe-4S] cluster. S-adenosyl-L-methionine contacts are provided by residues Gly-166 to Glu-167, Ser-198, Ser-220 to His-222, and Asn-302. Catalysis depends on Cys-345, which acts as the S-methylcysteine intermediate.

It belongs to the radical SAM superfamily. RlmN family. The cofactor is [4Fe-4S] cluster.

Its subcellular location is the cytoplasm. It carries out the reaction adenosine(2503) in 23S rRNA + 2 reduced [2Fe-2S]-[ferredoxin] + 2 S-adenosyl-L-methionine = 2-methyladenosine(2503) in 23S rRNA + 5'-deoxyadenosine + L-methionine + 2 oxidized [2Fe-2S]-[ferredoxin] + S-adenosyl-L-homocysteine. The catalysed reaction is adenosine(37) in tRNA + 2 reduced [2Fe-2S]-[ferredoxin] + 2 S-adenosyl-L-methionine = 2-methyladenosine(37) in tRNA + 5'-deoxyadenosine + L-methionine + 2 oxidized [2Fe-2S]-[ferredoxin] + S-adenosyl-L-homocysteine. Specifically methylates position 2 of adenine 2503 in 23S rRNA and position 2 of adenine 37 in tRNAs. m2A2503 modification seems to play a crucial role in the proofreading step occurring at the peptidyl transferase center and thus would serve to optimize ribosomal fidelity. This is Dual-specificity RNA methyltransferase RlmN from Delftia acidovorans (strain DSM 14801 / SPH-1).